A 208-amino-acid chain; its full sequence is Microcin J25-processing protein McjB (208 aa).

The protein resides in the cytoplasm. Functionally, along with McjC, necessary and sufficient to process the inactive microcin J25 (McjA) precursor into the active peptide. This Escherichia coli protein is Microcin J25-processing protein McjB (mcjB).